A 148-amino-acid chain; its full sequence is MKVIFLKDVKGKGKKGETKNVADGYANNFLIKNGYAVEASNAALSTLSAQKKKEDKLAAEELAEAKALKEKMEKLTVELKAKSGEGGRLFGSITSKQIAQTLEKTHGIKVDKRKMDLPEAIRALGHTKVPVKLHHEVTATLDVHVSEE.

This sequence belongs to the bacterial ribosomal protein bL9 family.

In terms of biological role, binds to the 23S rRNA. The chain is Large ribosomal subunit protein bL9 from Listeria innocua serovar 6a (strain ATCC BAA-680 / CLIP 11262).